We begin with the raw amino-acid sequence, 562 residues long: Probable malate:quinone oxidoreductase (562 aa).

Residues 530 to 562 (EVPDKSATPTDPTIAPKHQHSTTHNANSEMQAL) are disordered. Residues 551-562 (TTHNANSEMQAL) show a composition bias toward polar residues.

It belongs to the MQO family. The cofactor is FAD.

The enzyme catalyses (S)-malate + a quinone = a quinol + oxaloacetate. The protein operates within carbohydrate metabolism; tricarboxylic acid cycle; oxaloacetate from (S)-malate (quinone route): step 1/1. This is Probable malate:quinone oxidoreductase from Xylella fastidiosa (strain M12).